Here is a 397-residue protein sequence, read N- to C-terminus: Protein WRKY1 (397 aa).

A DNA-binding region (WRKY) is located at residues Lys326–Val392.

This sequence belongs to the WRKY group II-d family. Interacts with RS2. As to expression, more abundant in apices and young leaf primordia than in fully expanded leaf tissues.

The protein localises to the nucleus. In terms of biological role, transcription factor. Interacts specifically with the W box (5'-(T)TGAC[CT]-3'), a frequently occurring elicitor-responsive cis-acting element. The polypeptide is Protein WRKY1 (Zea mays (Maize)).